The primary structure comprises 160 residues: Transcriptional repressor NrdR (160 aa).

Residues C3 to C34 fold into a zinc finger. The 91-residue stretch at L49–V139 folds into the ATP-cone domain.

It belongs to the NrdR family. Zn(2+) is required as a cofactor.

In terms of biological role, negatively regulates transcription of bacterial ribonucleotide reductase nrd genes and operons by binding to NrdR-boxes. The chain is Transcriptional repressor NrdR from Exiguobacterium sibiricum (strain DSM 17290 / CCUG 55495 / CIP 109462 / JCM 13490 / 255-15).